The primary structure comprises 299 residues: Glycerol-3-phosphate dehydrogenase [NAD(P)+] (299 aa).

The NADPH site is built by Trp11, Arg30, His31, and Lys79. Sn-glycerol 3-phosphate is bound by residues Lys79, Gly107, and Ser109. An NADPH-binding site is contributed by Ala111. Lys161, Asp214, Ser224, Arg225, and Asn226 together coordinate sn-glycerol 3-phosphate. Lys161 (proton acceptor) is an active-site residue. Arg225 serves as a coordination point for NADPH. 2 residues coordinate NADPH: Val249 and Glu251.

Belongs to the NAD-dependent glycerol-3-phosphate dehydrogenase family.

The protein localises to the cytoplasm. It carries out the reaction sn-glycerol 3-phosphate + NAD(+) = dihydroxyacetone phosphate + NADH + H(+). It catalyses the reaction sn-glycerol 3-phosphate + NADP(+) = dihydroxyacetone phosphate + NADPH + H(+). It functions in the pathway membrane lipid metabolism; glycerophospholipid metabolism. Functionally, catalyzes the reduction of the glycolytic intermediate dihydroxyacetone phosphate (DHAP) to sn-glycerol 3-phosphate (G3P), the key precursor for phospholipid synthesis. The chain is Glycerol-3-phosphate dehydrogenase [NAD(P)+] from Nitratiruptor sp. (strain SB155-2).